The following is a 709-amino-acid chain: SH3 domain-containing kinase-binding protein 1 (709 aa).

SH3 domains lie at 1–58 and 98–157; these read MVEA…EIKK and RRRR…ELSG. Phosphoserine occurs at positions 156, 159, 227, and 274. Positions 221-239 are enriched in low complexity; that stretch reads ETTGSESDGGDSSSTKSEG. The tract at residues 221–242 is disordered; that stretch reads ETTGSESDGGDSSSTKSEGANG. Disordered stretches follow at residues 289 to 309, 372 to 485, and 511 to 650; these read GKKL…MDSR, SDFD…KIDL, and DSVI…VSSQ. Position 298 is a phosphothreonine (T298). Positions 311-372 constitute an SH3 3 domain; that stretch reads KTKDYCKVIF…PDNFVKLLPS (62 aa). Residues 399 to 434 show a composition bias toward basic and acidic residues; it reads TERKHEIKKIPPERPETLPNRTEEKERPEREPKLDL. The residue at position 480 (S480) is a Phosphoserine. Residues 513–528 are compositionally biased toward polar residues; that stretch reads VISSTEKLSHPTTSRP. The segment covering 535-554 has biased composition (low complexity); that stretch reads PPSQSLTSSSLSSPDIFDSP. Phosphoserine is present on residues S553, S555, and S565. A compositionally biased stretch (basic and acidic residues) spans 561-575; it reads EEHISLAHRGIDVSK. The segment covering 579–592 has biased composition (polar residues); it reads KTVTISQVSDNKTS. A compositionally biased stretch (low complexity) spans 600–623; it reads MAAASSGPASLSSVASSPMSSSLG. Polar residues predominate over residues 627–636; sequence QRASSPSLFS. S631 is subject to Phosphoserine. The stretch at 646 to 708 forms a coiled coil; the sequence is AVSSQAAIEE…VNDIKKALQS (63 aa).

Can self-associate and form homotetramers. Interacts with CD2, F-actin capping protein, PIK3R3, GRB2, EGFR, MET, BLNK, MAP3K4, PDCD6IP, SPRY2, ARHGAP17, ARHGAP27, CRK, BCAR1, SOS1, ASAP1, ARAP3, HIP1R, SYNJ2, INPP5D and STAP1. Interacts with E3 ubiquitin-protein ligase CBL. Interacts with CBLB, but does not interact with CBLC. Two molecules of SH3KBP1 seem to bind through their respective SH3 1 domain to one molecule of CBLB. The interaction with CBL or CBLB and EGFR is increased upon EGF stimulation. The interaction with CBL is attenuated by PDCD6IP. Interacts (via SH3 domains) with ARAP1. The interaction is independent of EGF and does not affect ARAP1 GTPase-activating activity but is involved in regulating ubiquitination and endocytic trafficking of EGFR. ARAP1 competes with CBL for binding to SH3KBP1 and prevents interaction of CBL with SH3KBP1; this is likely to regulate SH3KBP1-mediated internalization of EGFR. Interacts through its proline-rich region with the SH3 domain of endophilins SH3GL1, SH3GL2 and SH3GL3. The SH3KBP1-endophilin complex seems to associate with a complex containing the phosphorylated receptor (EGFR or MET) and phosphorylated CBL. Probably associates with ASAP1 and phosphorylated EGFR. Probably part of a complex consisting of at least SH3KBP1, ASAP1 and ARAP3. Interacts with focal adhesion kinases PTK2/FAK1 and PTK2B/PYK2, probably as a dimer. Interacts with DAB2 and probably associates with chathrin through its interaction with DAB2. Part of a complex consisting of SH3KBP1, DAB2, and clathrin heavy chain. DAB2 and clathrin dissociate from SH3KBP1 following growth factor treatment, enabling interaction with CBL. Interacts with DDN and probably associates with MAGI2 through its interaction with DDN. Interacts with the SH3 domains of SRC tyrosine-protein kinases SRC, LCK, LYN, FGR, FYN and HCK. Interacts with TRADD, BIRC2, TRAF1, TRAF2 and TNFR1, and the association with a TNFR1-associated complex upon stimulation with TNF-alpha seems to be mediated by SRC. Probably part of a complex consisting of at least SH3KBP1, ASAP1 and ARAP3. Interacts (via SH3 domains) with SHKBP1 (via PXXXPR motifs). Interacts with ATX2. Interaction with CBL is abolished in the presence of SHKBP1. Interacts (via SH3 domains) with ZFP36 (via extreme C-terminal region). Interacts with MAP3K4; this interaction enhances the association with ZFP36. In terms of processing, monoubiquitinated by CBL and CBLB after EGF stimulation; probably on its C-terminus.

It localises to the cytoplasm. Its subcellular location is the cytoskeleton. It is found in the cytoplasmic vesicle membrane. The protein resides in the synapse. The protein localises to the synaptosome. It localises to the cell junction. Its subcellular location is the focal adhesion. Adapter protein involved in regulating diverse signal transduction pathways. Involved in the regulation of endocytosis and lysosomal degradation of ligand-induced receptor tyrosine kinases, including EGFR and MET/hepatocyte growth factor receptor, through an association with CBL and endophilins. The association with CBL, and thus the receptor internalization, may be inhibited by an interaction with PDCD6IP and/or SPRY2. Involved in regulation of ligand-dependent endocytosis of the IgE receptor. Attenuates phosphatidylinositol 3-kinase activity by interaction with its regulatory subunit. May be involved in regulation of cell adhesion; promotes the interaction between TTK2B and PDCD6IP. May be involved in the regulation of cellular stress response via the MAPK pathways through its interaction with MAP3K4. Is involved in modulation of tumor necrosis factor mediated apoptosis. Plays a role in the regulation of cell morphology and cytoskeletal organization. Required in the control of cell shape and migration. Has an essential role in the stimulation of B cell activation. The protein is SH3 domain-containing kinase-binding protein 1 (Sh3kbp1) of Mus musculus (Mouse).